An 89-amino-acid chain; its full sequence is UPF0367 protein CYB_2632 (89 aa).

A disordered region spans residues 69–89; the sequence is SKSGSASPMGTRPGFLAQLQS.

It belongs to the UPF0367 family.

The sequence is that of UPF0367 protein CYB_2632 from Synechococcus sp. (strain JA-2-3B'a(2-13)) (Cyanobacteria bacterium Yellowstone B-Prime).